A 202-amino-acid chain; its full sequence is MSCVPWKGDKAKAESSDLPQAAPPQIYHEKQRRELCALHALNNVFQDSNAFTRETLQEIFQRLSPNTMVTPHKKSMLGNGNYDVNVIMAALQTKGYEAVWWDKRRDVGVIALTNVMGFIMNLPSSLCWGPLKLPLKRQHWICVREVGGAYYNLDSKLKMPEWIGGESELRKFLKYHLRGKNCELLLVVPEEVEAHQSWRADV.

Positions 1-22 (MSCVPWKGDKAKAESSDLPQAA) are disordered. The residue at position 15 (S15) is a Phosphoserine. Positions 23–202 (PPQIYHEKQR…EAHQSWRADV (180 aa)) constitute a Josephin domain. Residue C36 is the Nucleophile of the active site. H139 (proton acceptor) is an active-site residue.

As to quaternary structure, interacts with beta-actin/ACTB. Post-translationally, monoubiquitinated. Ubiquitination activates deubiquitination activity in vitro. As to expression, widely expressed (at protein level).

It is found in the cell membrane. The protein resides in the cytoplasm. It carries out the reaction Thiol-dependent hydrolysis of ester, thioester, amide, peptide and isopeptide bonds formed by the C-terminal Gly of ubiquitin (a 76-residue protein attached to proteins as an intracellular targeting signal).. In terms of biological role, deubiquitinates monoubiquitinated probes (in vitro). When ubiquitinated, cleaves 'Lys-63'-linked and 'Lys-48'-linked poly-ubiquitin chains (in vitro), hence may act as a deubiquitinating enzyme. May increase macropinocytosis and suppress clathrin- and caveolae-mediated endocytosis. May enhance membrane dynamics and cell motility independently of its catalytic activity. The chain is Josephin-1 (Josd1) from Mus musculus (Mouse).